Consider the following 262-residue polypeptide: 14-3-3 protein I (262 aa).

Belongs to the 14-3-3 family. Homodimer. Forms a complex composed of CDPK1, PKA regulatory subunit PKAr and 14-3-3I; the complex is formed in merozoites in response to low extracellular level of K(+) and may play a role in microneme secretion. Interacts with CDPK1 (when phosphorylated) in a Ca(2+)-independent manner; the interaction does not regulate CDPK1 catalytic activity but is required for merozoite invasion of host erythrocytes. Interacts with PKA regulatory subunit PKAr (when phosphorylated) in a Ca(2+)-dependent manner. Interacts with histone H3 (when phosphorylated at 'Ser-28' or when phosphorylated at 'Ser-28' and 'Ser-32').

It localises to the cell membrane. Its subcellular location is the cytoplasm. The protein resides in the nucleus. Its function is as follows. Adapter protein which binds to its partners, usually via a phosphoserine or phosphothreonine motif. Binding generally results in the modulation of the activity and/or cellular localization of the binding partner. Via its interaction with CDPK1 and PKAr, involved in merozoite microneme secretion and thus in merozoite invasion of host erythrocytes. The polypeptide is 14-3-3 protein I (Plasmodium falciparum (isolate 3D7)).